The chain runs to 473 residues: Glutamate--tRNA ligase 1 (473 aa).

A 'HIGH' region motif is present at residues 11–21 (PSPTGYLHIGG). Over residues 113–133 (KARAEGRPPRYDGRWRDRDPS) the composition is skewed to basic and acidic residues. The tract at residues 113 to 136 (KARAEGRPPRYDGRWRDRDPSEAP) is disordered. The 'KMSKS' region motif lies at 240 to 244 (KLSKR). K243 provides a ligand contact to ATP.

The protein belongs to the class-I aminoacyl-tRNA synthetase family. Glutamate--tRNA ligase type 1 subfamily. In terms of assembly, monomer.

Its subcellular location is the cytoplasm. The catalysed reaction is tRNA(Glu) + L-glutamate + ATP = L-glutamyl-tRNA(Glu) + AMP + diphosphate. Functionally, catalyzes the attachment of glutamate to tRNA(Glu) in a two-step reaction: glutamate is first activated by ATP to form Glu-AMP and then transferred to the acceptor end of tRNA(Glu). The chain is Glutamate--tRNA ligase 1 from Brucella melitensis biotype 1 (strain ATCC 23456 / CCUG 17765 / NCTC 10094 / 16M).